The primary structure comprises 206 residues: Cytidylate kinase (206 aa).

An ATP-binding site is contributed by G7 to S15.

The protein belongs to the cytidylate kinase family. Type 1 subfamily.

It is found in the cytoplasm. The enzyme catalyses CMP + ATP = CDP + ADP. It catalyses the reaction dCMP + ATP = dCDP + ADP. The sequence is that of Cytidylate kinase from Deinococcus radiodurans (strain ATCC 13939 / DSM 20539 / JCM 16871 / CCUG 27074 / LMG 4051 / NBRC 15346 / NCIMB 9279 / VKM B-1422 / R1).